A 69-amino-acid chain; its full sequence is U2-agatoxin-Ao1i (69 aa).

Residues 1–20 form the signal peptide; it reads MKAIISLLLISAMVFSMIEA. Residues 21 to 34 constitute a propeptide that is removed on maturation; the sequence is VPVXXGLQLFESER. Disulfide bonds link Cys-36–Cys-52, Cys-43–Cys-57, and Cys-51–Cys-67. Leu-68 is modified (leucine amide).

It belongs to the neurotoxin 01 (U2-agtx) family. Expressed by the venom gland.

It localises to the secreted. In terms of biological role, insect active toxin causing rapid but reversible paralysis in crickets. No activity shown in mammals. Does not show effect on mammalian voltage-gated calcium channels. The sequence is that of U2-agatoxin-Ao1i from Agelena orientalis (Funnel-web spider).